A 273-amino-acid polypeptide reads, in one-letter code: tRNA pseudouridine synthase B (273 aa).

The active-site Nucleophile is the D38.

It belongs to the pseudouridine synthase TruB family. Type 1 subfamily.

The catalysed reaction is uridine(55) in tRNA = pseudouridine(55) in tRNA. Its function is as follows. Responsible for synthesis of pseudouridine from uracil-55 in the psi GC loop of transfer RNAs. The polypeptide is tRNA pseudouridine synthase B (Campylobacter concisus (strain 13826)).